Reading from the N-terminus, the 333-residue chain is tRNA N6-adenosine threonylcarbamoyltransferase (333 aa).

Fe cation is bound by residues His-111 and His-115. Substrate contacts are provided by residues 134 to 138, Asp-167, Gly-180, and Asn-272; that span reads LVSGG. Residue Asp-300 coordinates Fe cation.

Belongs to the KAE1 / TsaD family. The cofactor is Fe(2+).

The protein localises to the cytoplasm. It carries out the reaction L-threonylcarbamoyladenylate + adenosine(37) in tRNA = N(6)-L-threonylcarbamoyladenosine(37) in tRNA + AMP + H(+). In terms of biological role, required for the formation of a threonylcarbamoyl group on adenosine at position 37 (t(6)A37) in tRNAs that read codons beginning with adenine. Is involved in the transfer of the threonylcarbamoyl moiety of threonylcarbamoyl-AMP (TC-AMP) to the N6 group of A37, together with TsaE and TsaB. TsaD likely plays a direct catalytic role in this reaction. The chain is tRNA N6-adenosine threonylcarbamoyltransferase from Legionella pneumophila (strain Paris).